The sequence spans 258 residues: Protein IMPACT homolog (258 aa).

An RWD domain is found at Glu-10–Glu-114. Lys-187 participates in a covalent cross-link: Glycyl lysine isopeptide (Lys-Gly) (interchain with G-Cter in ubiquitin).

This sequence belongs to the IMPACT family. As to quaternary structure, interacts (via N-terminus) with GCN1 (via C-terminus); this interaction reduces the GCN1-GCN20 complex formation and prevents the interaction of GCN1 with GCN2 protein kinase and GCN2 activation in amino acid-starved cells. Interacts (via C-terminus) with ACT1; this interaction occurs in a GCN1-independent manner. Interacts with RPL39; this interaction occurs in a GCN1-independent manner. Associates (via middle region) with ribosomes; this association occurs in a GCN1-independent manner and persists under amino acid starvation conditions.

The protein resides in the cytoplasm. Its subcellular location is the nucleus. Translational regulator that ensures constant high levels of translation under amino acid starvation. Plays a role as a negative regulator of the GCN2 kinase activity; impairs GCN1-mediated GCN2 activation, and hence GCN2-mediated eIF-2-alpha phosphorylation in amino acid-starved cells and subsequent down-regulation of protein synthesis. In normal conditions, it resides in a actin complex and has no activity. The polypeptide is Protein IMPACT homolog (YIH1) (Saccharomyces cerevisiae (strain ATCC 204508 / S288c) (Baker's yeast)).